A 426-amino-acid polypeptide reads, in one-letter code: Probable alpha-galactosidase B (426 aa).

An N-terminal signal peptide occupies residues 1–13 (MSRSKTRQGKLPA). 2 disulfides stabilise this stretch: Cys24-Cys56 and Cys106-Cys136. Residue Asp134 is the Nucleophile of the active site. N-linked (GlcNAc...) asparagine glycans are attached at residues Asn141 and Asn159. Residue 204-208 (EWGQA) coordinates substrate. The N-linked (GlcNAc...) asparagine glycan is linked to Asn215. Asp226 serves as the catalytic Proton donor. N-linked (GlcNAc...) asparagine glycosylation is present at Asn265.

The protein belongs to the glycosyl hydrolase 27 family.

The protein resides in the secreted. It carries out the reaction Hydrolysis of terminal, non-reducing alpha-D-galactose residues in alpha-D-galactosides, including galactose oligosaccharides, galactomannans and galactolipids.. Hydrolyzes a variety of simple alpha-D-galactoside as well as more complex molecules such as oligosaccharides and polysaccharides. This Aspergillus fumigatus (strain CBS 144.89 / FGSC A1163 / CEA10) (Neosartorya fumigata) protein is Probable alpha-galactosidase B (aglB).